Consider the following 198-residue polypeptide: Na(+)-translocating NADH-quinone reductase subunit E (198 aa).

6 helical membrane passes run 11-31 (SIFIENMALSFFLGMCTFLAV), 35-55 (VSTAFGLGIAVIVVLGIAVPA), 77-97 (FLNFITFIGVIAALVQILEMI), 110-130 (GIFLPLITVNCAIFGAVSFMV), 140-160 (VVYGIGAGTGWMLAIVALAGI), and 176-196 (LGITFISAGLMALGFMSFSGI).

This sequence belongs to the NqrDE/RnfAE family. As to quaternary structure, composed of six subunits; NqrA, NqrB, NqrC, NqrD, NqrE and NqrF.

It is found in the cell inner membrane. The catalysed reaction is a ubiquinone + n Na(+)(in) + NADH + H(+) = a ubiquinol + n Na(+)(out) + NAD(+). Functionally, NQR complex catalyzes the reduction of ubiquinone-1 to ubiquinol by two successive reactions, coupled with the transport of Na(+) ions from the cytoplasm to the periplasm. NqrA to NqrE are probably involved in the second step, the conversion of ubisemiquinone to ubiquinol. The sequence is that of Na(+)-translocating NADH-quinone reductase subunit E from Glaesserella parasuis serovar 5 (strain SH0165) (Haemophilus parasuis).